The chain runs to 900 residues: Endoglucanase H (900 aa).

The N-terminal stretch at 1–44 (MKKRLLVSFLVLSIIVGLLSFQSLGNYNSGLKIGAWVGTQPSES) is a signal peptide. Positions 45–298 (AIKSFQELQG…NSSPEALAAY (254 aa)) constitute a GH26 domain. Residue Glu-131 is the Proton donor of the active site. Catalysis depends on Glu-244, which acts as the Nucleophile. The interval 300-630 (EAIGAGSSNP…DTEILNALFN (331 aa)) is catalytic. The segment at 303–326 (GAGSSNPTPTPTWTSTPPSSSPKA) is disordered. A compositionally biased stretch (low complexity) spans 306–324 (SSNPTPTPTWTSTPPSSSP). Catalysis depends on Glu-460, which acts as the Proton donor. The Nucleophile role is filled by Glu-565. One can recognise a CBM11 domain in the interval 655–900 (AVGEKMLDDF…LLKAISEIPI (246 aa)). The Dockerin domain occupies 827-900 (PSIKHGDLNF…LLKAISEIPI (74 aa)).

It in the N-terminal section; belongs to the glycosyl hydrolase 5 (cellulase A) family. This sequence in the C-terminal section; belongs to the glycosyl hydrolase 26 family.

It carries out the reaction Endohydrolysis of (1-&gt;4)-beta-D-glucosidic linkages in cellulose, lichenin and cereal beta-D-glucans.. Its function is as follows. This enzyme catalyzes the endohydrolysis of 1,4-beta-glucosidic linkages in cellulose, lichenin and cereal beta-D-glucans. The chain is Endoglucanase H (celH) from Acetivibrio thermocellus (strain ATCC 27405 / DSM 1237 / JCM 9322 / NBRC 103400 / NCIMB 10682 / NRRL B-4536 / VPI 7372) (Clostridium thermocellum).